The primary structure comprises 224 residues: UPF0758 protein Mmwyl1_0624 (224 aa).

In terms of domain architecture, MPN spans 102–224; the sequence is VFASAEHVRT…PVSLAERGLV (123 aa). Zn(2+) contacts are provided by His173, His175, and Asp186. The short motif at 173–186 is the JAMM motif element; the sequence is HNHPSGIAEPSQAD.

Belongs to the UPF0758 family.

The protein is UPF0758 protein Mmwyl1_0624 of Marinomonas sp. (strain MWYL1).